A 1189-amino-acid chain; its full sequence is Magnesium-chelatase subunit H (1189 aa).

Belongs to the Mg-chelatase subunit H family.

It carries out the reaction protoporphyrin IX + Mg(2+) + ATP + H2O = Mg-protoporphyrin IX + ADP + phosphate + 3 H(+). The protein operates within porphyrin-containing compound metabolism; bacteriochlorophyll biosynthesis (light-independent). Functionally, involved in bacteriochlorophyll pigment biosynthesis; introduces a magnesium ion into protoporphyrin IX to yield Mg-protoroporphyrin IX. This is Magnesium-chelatase subunit H (bchH) from Rhodobacter capsulatus (strain ATCC BAA-309 / NBRC 16581 / SB1003).